The sequence spans 270 residues: Formamidopyrimidine-DNA glycosylase (270 aa).

P2 functions as the Schiff-base intermediate with DNA in the catalytic mechanism. The Proton donor role is filled by E3. The active-site Proton donor; for beta-elimination activity is the K57. Residues H90, R109, and K150 each coordinate DNA. The FPG-type zinc-finger motif lies at 235-269 (LVYGNKDKPCPRCGTKIKSIIIGQRNSFFCPQCQK). The active-site Proton donor; for delta-elimination activity is the R259.

The protein belongs to the FPG family. As to quaternary structure, monomer. The cofactor is Zn(2+).

It catalyses the reaction Hydrolysis of DNA containing ring-opened 7-methylguanine residues, releasing 2,6-diamino-4-hydroxy-5-(N-methyl)formamidopyrimidine.. The catalysed reaction is 2'-deoxyribonucleotide-(2'-deoxyribose 5'-phosphate)-2'-deoxyribonucleotide-DNA = a 3'-end 2'-deoxyribonucleotide-(2,3-dehydro-2,3-deoxyribose 5'-phosphate)-DNA + a 5'-end 5'-phospho-2'-deoxyribonucleoside-DNA + H(+). Its function is as follows. Involved in base excision repair of DNA damaged by oxidation or by mutagenic agents. Acts as a DNA glycosylase that recognizes and removes damaged bases. Has a preference for oxidized purines, such as 7,8-dihydro-8-oxoguanine (8-oxoG). Has AP (apurinic/apyrimidinic) lyase activity and introduces nicks in the DNA strand. Cleaves the DNA backbone by beta-delta elimination to generate a single-strand break at the site of the removed base with both 3'- and 5'-phosphates. The sequence is that of Formamidopyrimidine-DNA glycosylase from Histophilus somni (strain 129Pt) (Haemophilus somnus).